A 208-amino-acid chain; its full sequence is ATP-dependent Clp protease proteolytic subunit (208 aa).

Ser107 serves as the catalytic Nucleophile. The active site involves His132.

The protein belongs to the peptidase S14 family. Fourteen ClpP subunits assemble into 2 heptameric rings which stack back to back to give a disk-like structure with a central cavity, resembling the structure of eukaryotic proteasomes.

The protein localises to the cytoplasm. The catalysed reaction is Hydrolysis of proteins to small peptides in the presence of ATP and magnesium. alpha-casein is the usual test substrate. In the absence of ATP, only oligopeptides shorter than five residues are hydrolyzed (such as succinyl-Leu-Tyr-|-NHMec, and Leu-Tyr-Leu-|-Tyr-Trp, in which cleavage of the -Tyr-|-Leu- and -Tyr-|-Trp bonds also occurs).. In terms of biological role, cleaves peptides in various proteins in a process that requires ATP hydrolysis. Has a chymotrypsin-like activity. Plays a major role in the degradation of misfolded proteins. The protein is ATP-dependent Clp protease proteolytic subunit of Jannaschia sp. (strain CCS1).